The sequence spans 475 residues: Trifunctional enzyme subunit beta, mitochondrial (475 aa).

The transit peptide at 1-34 directs the protein to the mitochondrion; that stretch reads MTTILTYPFKNLPTASKWALRFSIRPLSCSSQLR. Position 73 is an N6-acetyllysine; alternate (K73). K73 carries the N6-succinyllysine; alternate modification. Catalysis depends on C139, which acts as the Acyl-thioester intermediate. An intramembrane segment occupies 174–221; sequence IRHSRKMRKLMLDLNKAKSMGQRLSLISKFRFNFLAPELPAVSEFSTS. Residue K189 is modified to N6-acetyllysine; alternate. K189 is subject to N6-succinyllysine; alternate. 3 positions are modified to N6-succinyllysine: K191, K273, and K292. K294 is subject to N6-acetyllysine; alternate. At K294 the chain carries N6-succinyllysine; alternate. At K299 the chain carries N6-acetyllysine. Position 333 is an N6-acetyllysine; alternate (K333). The residue at position 333 (K333) is an N6-succinyllysine; alternate. An N6-acetyllysine mark is found at K349 and K362. C459 functions as the Proton donor/acceptor in the catalytic mechanism.

It belongs to the thiolase-like superfamily. Thiolase family. As to quaternary structure, heterotetramer of 2 alpha/HADHA and 2 beta/HADHB subunits; forms the mitochondrial trifunctional enzyme. Also purified as higher order heterooligomers including a 4 alpha/HADHA and 4 beta/HADHB heterooligomer which physiological significance remains unclear. The mitochondrial trifunctional enzyme interacts with MTLN. Interacts with RSAD2/viperin.

It is found in the mitochondrion. Its subcellular location is the mitochondrion inner membrane. It localises to the mitochondrion outer membrane. The protein localises to the endoplasmic reticulum. It carries out the reaction an acyl-CoA + acetyl-CoA = a 3-oxoacyl-CoA + CoA. The enzyme catalyses butanoyl-CoA + acetyl-CoA = 3-oxohexanoyl-CoA + CoA. It catalyses the reaction hexanoyl-CoA + acetyl-CoA = 3-oxooctanoyl-CoA + CoA. The catalysed reaction is octanoyl-CoA + acetyl-CoA = 3-oxodecanoyl-CoA + CoA. It carries out the reaction decanoyl-CoA + acetyl-CoA = 3-oxododecanoyl-CoA + CoA. The enzyme catalyses dodecanoyl-CoA + acetyl-CoA = 3-oxotetradecanoyl-CoA + CoA. It catalyses the reaction tetradecanoyl-CoA + acetyl-CoA = 3-oxohexadecanoyl-CoA + CoA. It functions in the pathway lipid metabolism; fatty acid beta-oxidation. Mitochondrial trifunctional enzyme catalyzes the last three of the four reactions of the mitochondrial beta-oxidation pathway. The mitochondrial beta-oxidation pathway is the major energy-producing process in tissues and is performed through four consecutive reactions breaking down fatty acids into acetyl-CoA. Among the enzymes involved in this pathway, the trifunctional enzyme exhibits specificity for long-chain fatty acids. Mitochondrial trifunctional enzyme is a heterotetrameric complex composed of two proteins, the trifunctional enzyme subunit alpha/HADHA carries the 2,3-enoyl-CoA hydratase and the 3-hydroxyacyl-CoA dehydrogenase activities, while the trifunctional enzyme subunit beta/HADHB described here bears the 3-ketoacyl-CoA thiolase activity. This chain is Trifunctional enzyme subunit beta, mitochondrial (HADHB), found in Pan troglodytes (Chimpanzee).